The sequence spans 499 residues: Lysosomal Pro-X carboxypeptidase (499 aa).

A signal peptide spans 1–21 (MGRCSLLLLLLLIAFLTPGAA). The propeptide occupies 22 to 47 (NPVSPSLRAPSSLPWSTSFRSRPTIT). N103 is a glycosylation site (N-linked (GlcNAc...) asparagine). S181 (charge relay system) is an active-site residue. An SKS domain region spans residues 196 to 337 (HLVVGALASS…QNIFQALNVY (142 aa)). 4 disulfides stabilise this stretch: C217/C375, C235/C313, C266/C346, and C367/C397. N-linked (GlcNAc...) asparagine glycosylation occurs at N234. N339 and N348 each carry an N-linked (GlcNAc...) asparagine glycan. N418 carries N-linked (GlcNAc...) asparagine glycosylation. Catalysis depends on charge relay system residues D433 and H458.

The protein belongs to the peptidase S28 family. Homodimer.

The protein resides in the lysosome. The enzyme catalyses Cleavage of a -Pro-|-Xaa bond to release a C-terminal amino acid.. In terms of biological role, cleaves C-terminal amino acids linked to proline in peptides such as angiotensin II, III and des-Arg9-bradykinin. This cleavage occurs at acidic pH, but enzymatic activity is retained with some substrates at neutral pH. This Bos taurus (Bovine) protein is Lysosomal Pro-X carboxypeptidase (PRCP).